The following is a 505-amino-acid chain: ATP synthase subunit alpha (505 aa).

170-177 (GDRQTGKT) is an ATP binding site.

It belongs to the ATPase alpha/beta chains family. As to quaternary structure, F-type ATPases have 2 components, CF(1) - the catalytic core - and CF(0) - the membrane proton channel. CF(1) has five subunits: alpha(3), beta(3), gamma(1), delta(1), epsilon(1). CF(0) has four main subunits: a(1), b(1), b'(1) and c(9-12).

The protein resides in the cellular thylakoid membrane. The catalysed reaction is ATP + H2O + 4 H(+)(in) = ADP + phosphate + 5 H(+)(out). Produces ATP from ADP in the presence of a proton gradient across the membrane. The alpha chain is a regulatory subunit. This chain is ATP synthase subunit alpha, found in Prochlorococcus marinus subsp. pastoris (strain CCMP1986 / NIES-2087 / MED4).